We begin with the raw amino-acid sequence, 1663 residues long: Glutamine-rich protein 2 (1663 aa).

Disordered stretches follow at residues 80–239 (HGGF…LVPA), 423–481 (GLVQ…GTGQ), 575–615 (AQPR…QHGL), 880–925 (TYQQ…QVYP), and 948–984 (RGPG…APGQ). Composition is skewed to polar residues over residues 84-103 (TSLT…QPSI) and 131-150 (GVSS…QQQP). A compositionally biased stretch (basic and acidic residues) spans 171-182 (SDSDRHRSREKL). Over residues 206-217 (QPSSVPASQSQV) the composition is skewed to low complexity. The segment covering 958 to 975 (HGQEGLDPNRTRASDRHG) has biased composition (basic and acidic residues). 2 coiled-coil regions span residues 1085–1160 (KTVK…MENS) and 1286–1325 (EDHR…KADK). Over residues 1609–1619 (TRLPGILRKDS) the composition is skewed to basic and acidic residues. A disordered region spans residues 1609-1663 (TRLPGILRKDSSGTSKRKSQQPRPHVHRPPSLSSNGQLPSRPQSAQISAGNTSER). Positions 1623-1636 (SKRKSQQPRPHVHR) are enriched in basic residues. Residues 1639 to 1663 (SLSSNGQLPSRPQSAQISAGNTSER) show a composition bias toward polar residues.

As to quaternary structure, interacts with AKAP3, ODF2 and TSSK4. Interacts with AKAP4. Expressed in the sperm.

Its subcellular location is the nucleus membrane. It localises to the nucleus. It is found in the cytoplasm. The protein localises to the cell projection. The protein resides in the cilium. Its subcellular location is the flagellum. Functionally, has an essential role in the formation of sperm flagella and flagellar structure maintainance. It acts as a suppressor of ubiquitination and degradation of proteins involved in flagellar development and motility. In Homo sapiens (Human), this protein is Glutamine-rich protein 2 (QRICH2).